The following is a 198-amino-acid chain: V-type proton ATPase subunit E (198 aa).

This sequence belongs to the V-ATPase E subunit family.

Functionally, produces ATP from ADP in the presence of a proton gradient across the membrane. The sequence is that of V-type proton ATPase subunit E from Borrelia recurrentis (strain A1).